Consider the following 373-residue polypeptide: ATP-dependent 6-phosphofructokinase (373 aa).

ATP is bound by residues glycine 12, 74-75 (RD), and 110-113 (GGGT). Substrate contacts are provided by residues 133-135 (TID), arginine 170, 177-179 (MGH), glutamate 230, arginine 291, and 297-300 (YVQR). Aspartate 135 (proton acceptor) is an active-site residue.

This sequence belongs to the phosphofructokinase type A (PFKA) family. Mixed-substrate PFK group III subfamily. As to quaternary structure, homodimer or homotetramer. Mg(2+) serves as cofactor.

It is found in the cytoplasm. The catalysed reaction is beta-D-fructose 6-phosphate + ATP = beta-D-fructose 1,6-bisphosphate + ADP + H(+). Its pathway is carbohydrate degradation; glycolysis; D-glyceraldehyde 3-phosphate and glycerone phosphate from D-glucose: step 3/4. Catalyzes the phosphorylation of D-fructose 6-phosphate to fructose 1,6-bisphosphate by ATP, the first committing step of glycolysis. This chain is ATP-dependent 6-phosphofructokinase, found in Propionibacterium freudenreichii subsp. shermanii (strain ATCC 9614 / DSM 4902 / CIP 103027 / NCIMB 8099 / CIRM-BIA1).